Here is a 254-residue protein sequence, read N- to C-terminus: Hydroxyacylglutathione hydrolase (254 aa).

Residues His-54, His-56, Asp-58, His-59, His-111, Asp-130, and His-168 each coordinate Zn(2+).

The protein belongs to the metallo-beta-lactamase superfamily. Glyoxalase II family. As to quaternary structure, monomer. Zn(2+) is required as a cofactor.

It catalyses the reaction an S-(2-hydroxyacyl)glutathione + H2O = a 2-hydroxy carboxylate + glutathione + H(+). The protein operates within secondary metabolite metabolism; methylglyoxal degradation; (R)-lactate from methylglyoxal: step 2/2. In terms of biological role, thiolesterase that catalyzes the hydrolysis of S-D-lactoyl-glutathione to form glutathione and D-lactic acid. The sequence is that of Hydroxyacylglutathione hydrolase from Legionella pneumophila (strain Lens).